The following is a 128-amino-acid chain: Putative lipid-binding protein At4g00165 (128 aa).

Residues Met1–Gly23 form the signal peptide. Cystine bridges form between Cys34-Cys90, Cys46-Cys76, Cys56-Cys75, and Cys92-Cys128.

It belongs to the plant LTP family. PEARLI1 subfamily.

It is found in the secreted. The polypeptide is Putative lipid-binding protein At4g00165 (Arabidopsis thaliana (Mouse-ear cress)).